The sequence spans 495 residues: Leucine aminopeptidase 2 (495 aa).

The first 21 residues, 1–21 (MKSQLLSLAVAVTTISQGVVG), serve as a signal peptide directing secretion. The 95-residue stretch at 124–218 (PPASKIMAEL…EDGKNLATLV (95 aa)) folds into the PA domain. Asn142 and Asn235 each carry an N-linked (GlcNAc...) asparagine glycan. Residues His259 and Asp271 each coordinate Zn(2+). N-linked (GlcNAc...) asparagine glycosylation occurs at Asn272. The active-site Proton acceptor is Glu303. 2 residues coordinate Zn(2+): Glu304 and Asp332. A glycan (N-linked (GlcNAc...) asparagine) is linked at Asn352. Position 430 (His430) interacts with Zn(2+).

The protein belongs to the peptidase M28 family. M28A subfamily. In terms of assembly, monomer. The cofactor is Zn(2+).

It localises to the secreted. Activity is inhibited by EDTA, o-phenanthroline, bestatin and amastatin. Functionally, extracellular aminopeptidase that releases a wide variety of amino acids from natural peptides and contributes to pathogenicity. This is Leucine aminopeptidase 2 (LAP2) from Trichophyton rubrum (Athlete's foot fungus).